A 215-amino-acid chain; its full sequence is Chaperone protein TorD (215 aa).

The protein belongs to the TorD/DmsD family. TorD subfamily.

Its subcellular location is the cytoplasm. Functionally, involved in the biogenesis of TorA. Acts on TorA before the insertion of the molybdenum cofactor and, as a result, probably favors a conformation of the apoenzyme that is competent for acquiring the cofactor. This is Chaperone protein TorD from Vibrio atlanticus (strain LGP32) (Vibrio splendidus (strain Mel32)).